The chain runs to 544 residues: Probable protein kinase UbiB (544 aa).

The 379-residue stretch at 123–501 (EFDIKPLASA…KRQQATGKFL (379 aa)) folds into the Protein kinase domain. Residues 129 to 137 (LASASIAQV) and Lys-152 contribute to the ATP site. Residue Asp-287 is the Proton acceptor of the active site. A run of 2 helical transmembrane segments spans residues 496–516 (ATGK…AILV) and 519–539 (AYEQ…LLSW).

Belongs to the ABC1 family. UbiB subfamily.

The protein localises to the cell inner membrane. It participates in cofactor biosynthesis; ubiquinone biosynthesis [regulation]. Its function is as follows. Is probably a protein kinase regulator of UbiI activity which is involved in aerobic coenzyme Q (ubiquinone) biosynthesis. The polypeptide is Probable protein kinase UbiB (Vibrio parahaemolyticus serotype O3:K6 (strain RIMD 2210633)).